The primary structure comprises 25 residues: Flagellar filament core protein flaB1 (25 aa).

The protein belongs to the bacterial flagellin family. The flagellum consists of an outer layer composed of two sheath proteins, flaA1 (44 kDa) and flaA2 (35 kDa) around a core that contains three proteins flaB1 (37 kDa), flaB2 (34 kDa) and flaB3 (32 kDa).

The protein resides in the periplasmic flagellum. It localises to the periplasm. Component of the core of the flagella. The polypeptide is Flagellar filament core protein flaB1 (flaB1) (Brachyspira hyodysenteriae (Treponema hyodysenteriae)).